The following is a 90-amino-acid chain: UPF0335 protein RPA4190 (90 aa).

Belongs to the UPF0335 family.

The protein is UPF0335 protein RPA4190 of Rhodopseudomonas palustris (strain ATCC BAA-98 / CGA009).